Here is a 337-residue protein sequence, read N- to C-terminus: MHHHLNTLYQGQSLSRESTRDAFGQVVRGEVDPIVLASLLTALKIKGETPEEIAGAAEALLAEARDFPRPDYEFCDIVGTGGDGLNTINVSTTSALVAAACGLKVAKHGNRSVSSKSGSSDLLDKMGIKLDMSPAQARHCLDKLGICFLFAPQYHAGVRHAMPVRQALKTRTLFNVLGPLINPARPTYQLMGVYAPELVRPIAETLLALGLKTGMVVHGAGLDEIAIHGPTQVAQIRDGEIREFMITPADFGLETYPVSAIQGGEPEENRAITAAILAGQGTPAHNAAIAANVAPLLLMAGKAADLKSAAAEVLAVLASGKAAELAARLATLSHQEA.

Residues glycine 79, 82 to 83 (GD), threonine 87, 89 to 92 (NVST), 107 to 115 (KHGNRSVSS), and serine 119 contribute to the 5-phospho-alpha-D-ribose 1-diphosphate site. Glycine 79 is an anthranilate binding site. Serine 91 is a binding site for Mg(2+). Residue asparagine 110 participates in anthranilate binding. Arginine 165 lines the anthranilate pocket. Mg(2+)-binding residues include aspartate 223 and glutamate 224.

It belongs to the anthranilate phosphoribosyltransferase family. As to quaternary structure, homodimer. Requires Mg(2+) as cofactor.

The catalysed reaction is N-(5-phospho-beta-D-ribosyl)anthranilate + diphosphate = 5-phospho-alpha-D-ribose 1-diphosphate + anthranilate. It functions in the pathway amino-acid biosynthesis; L-tryptophan biosynthesis; L-tryptophan from chorismate: step 2/5. Functionally, catalyzes the transfer of the phosphoribosyl group of 5-phosphorylribose-1-pyrophosphate (PRPP) to anthranilate to yield N-(5'-phosphoribosyl)-anthranilate (PRA). In Aeromonas salmonicida (strain A449), this protein is Anthranilate phosphoribosyltransferase.